An 801-amino-acid chain; its full sequence is Fibroblast growth factor receptor 3 (801 aa).

The N-terminal stretch at 1–20 (MVVPACVLVFCVAVVAGATS) is a signal peptide. Residues 21–369 (EPPGPEQRVV…TDEAGSVYAG (349 aa)) lie on the Extracellular side of the membrane. The Ig-like C2-type 1 domain occupies 22-124 (PPGPEQRVVR…VLCHFSVRVT (103 aa)). A disulfide bridge connects residues C59 and C107. N96 carries N-linked (GlcNAc...) asparagine glycosylation. Positions 125–146 (DAPSSGDDEDGEDVAEDTGAPY) are disordered. Residues 130-140 (GDDEDGEDVAE) show a composition bias toward acidic residues. 2 consecutive Ig-like C2-type domains span residues 145–238 (PYWT…YTLD) and 247–349 (PILQ…AWLV). C170 and C222 are oxidised to a cystine. N-linked (GlcNAc...) asparagine glycans are attached at residues N219, N256, N288, N309, and N322. C269 and C333 are oxidised to a cystine. A helical membrane pass occupies residues 370 to 390 (VLSYGVVFFLFILVVAAVILC). Residues 391 to 801 (RLRSPPKKGL…GPPSNGGPRT (411 aa)) lie on the Cytoplasmic side of the membrane. A phosphoserine mark is found at S438 and S439. One can recognise a Protein kinase domain in the interval 466–756 (LTLGKPLGEG…LTVTSTDEYL (291 aa)). ATP contacts are provided by residues 472-480 (LGEGCFGQV) and K502. D611 acts as the Proton acceptor in catalysis. Phosphotyrosine; by autocatalysis occurs at positions 641, 642, 719, and 755. Positions 762-801 (FEQYSPGGQDTPSSSSSGDDSVFTHDLLPPGPPSNGGPRT) are disordered. A compositionally biased stretch (low complexity) spans 766-782 (SPGGQDTPSSSSSGDDS). Residues 790–801 (PPGPPSNGGPRT) show a composition bias toward pro residues.

Belongs to the protein kinase superfamily. Tyr protein kinase family. Fibroblast growth factor receptor subfamily. Monomer. Homodimer after ligand binding. Interacts with FGF1, FGF2, FGF4, FGF6; FGF8, FGF9, FGF10, FGF17, FGF18, FGF19, FGF20 and FGF23 (in vitro). Interacts with KLB. Affinity for fibroblast growth factors (FGFs) is increased by heparan sulfate glycosaminoglycans that function as coreceptors. Likewise, KLB increases the affinity for FGF19 and FGF21. Interacts with PIK3R1, PLCG1, SOCS1 and SOCS3. Post-translationally, autophosphorylated. Binding of FGF family members together with heparan sulfate proteoglycan or heparin promotes receptor dimerization and autophosphorylation on tyrosine residues. Autophosphorylation occurs in trans between the two FGFR molecules present in the dimer. Phosphorylation at Tyr-719 is essential for stimulation of cell proliferation and activation of PIK3R1, STAT1 and MAP kinase signaling. Phosphorylation at Tyr-755 is required for interaction with PIK3R1 and PLCG1. In terms of processing, ubiquitinated. Is rapidly ubiquitinated after ligand binding and autophosphorylation, leading to receptor internalization and degradation. Subject to both proteasomal and lysosomal degradation. N-glycosylated in the endoplasmic reticulum. The N-glycan chains undergo further maturation to an Endo H-resistant form in the Golgi apparatus. In embryo, expressed in heart, lung, kidney, skin, head and liver but not in muscle. In adult, highest levels in brain. Also expressed in liver, lung, kidney, testis, ovary and uterus. Very low levels in heart, thymus, spleen and muscle.

The protein resides in the cell membrane. Its subcellular location is the cytoplasmic vesicle. It localises to the endoplasmic reticulum. It carries out the reaction L-tyrosyl-[protein] + ATP = O-phospho-L-tyrosyl-[protein] + ADP + H(+). Its activity is regulated as follows. Present in an inactive conformation in the absence of bound ligand. Ligand binding leads to dimerization and activation by autophosphorylation on tyrosine residues. Tyrosine-protein kinase that acts as a cell-surface receptor for fibroblast growth factors and plays an essential role in the regulation of cell proliferation, differentiation and apoptosis. Plays an essential role in the regulation of chondrocyte differentiation, proliferation and apoptosis, and is required for normal skeleton development. Regulates both osteogenesis and postnatal bone mineralization by osteoblasts. Promotes apoptosis in chondrocytes, but can also promote cancer cell proliferation. Required for normal development of the inner ear. Phosphorylates PLCG1, CBL and FRS2. Ligand binding leads to the activation of several signaling cascades. Activation of PLCG1 leads to the production of the cellular signaling molecules diacylglycerol and inositol 1,4,5-trisphosphate. Phosphorylation of FRS2 triggers recruitment of GRB2, GAB1, PIK3R1 and SOS1, and mediates activation of RAS, MAPK1/ERK2, MAPK3/ERK1 and the MAP kinase signaling pathway, as well as of the AKT1 signaling pathway. Plays a role in the regulation of vitamin D metabolism. Mutations that lead to constitutive kinase activation or impair normal FGFR3 maturation, internalization and degradation lead to aberrant signaling. Over-expressed or constitutively activated FGFR3 promotes activation of STAT1, STAT5A and STAT5B. Plays a role in postnatal lung development. In Mus musculus (Mouse), this protein is Fibroblast growth factor receptor 3 (Fgfr3).